A 145-amino-acid chain; its full sequence is Large ribosomal subunit protein uL15 (145 aa).

The disordered stretch occupies residues 1–50 (MLHTIKPVANARKTTKRLGRGPGSGTGKTSGKGHKGQLARSGKTLRPGFE). A compositionally biased stretch (gly residues) spans 20-30 (RGPGSGTGKTS).

This sequence belongs to the universal ribosomal protein uL15 family. Part of the 50S ribosomal subunit.

Its function is as follows. Binds to the 23S rRNA. This is Large ribosomal subunit protein uL15 from Phytoplasma australiense.